We begin with the raw amino-acid sequence, 146 residues long: Holo-[acyl-carrier-protein] synthase (146 aa).

2 residues coordinate Mg(2+): aspartate 9 and glutamate 63.

Belongs to the P-Pant transferase superfamily. AcpS family. The cofactor is Mg(2+).

It localises to the cytoplasm. It carries out the reaction apo-[ACP] + CoA = holo-[ACP] + adenosine 3',5'-bisphosphate + H(+). Functionally, transfers the 4'-phosphopantetheine moiety from coenzyme A to a Ser of acyl-carrier-protein. This Burkholderia multivorans (strain ATCC 17616 / 249) protein is Holo-[acyl-carrier-protein] synthase.